The primary structure comprises 45 residues: Large ribosomal subunit protein bL34 (45 aa).

The disordered stretch occupies residues 1-45; sequence MTKRTFGGTSRKRKRVSGFRVRMRSHTGRRVIKSRRQKGRERIAV. Residues 10–39 show a composition bias toward basic residues; it reads SRKRKRVSGFRVRMRSHTGRRVIKSRRQKG.

It belongs to the bacterial ribosomal protein bL34 family.

This Prochlorococcus marinus (strain MIT 9301) protein is Large ribosomal subunit protein bL34.